Consider the following 320-residue polypeptide: Glutaminyl-peptide cyclotransferase (320 aa).

The span at M1–K12 shows a compositional bias: basic residues. Residues M1–S22 form a disordered region. At M1 to R36 the chain is on the cytoplasmic side. A helical; Signal-anchor for type II membrane protein transmembrane segment spans residues F37 to F57. The Lumenal segment spans residues N58–V320. Residues N99 and N163 are each glycosylated (N-linked (GlcNAc...) asparagine).

This sequence belongs to the plant glutaminyl-peptide cyclotransferase family. In terms of processing, glycosylated.

The protein resides in the endoplasmic reticulum membrane. It carries out the reaction N-terminal L-glutaminyl-[peptide] = N-terminal 5-oxo-L-prolyl-[peptide] + NH4(+). In terms of biological role, converts glutamine and N-terminal glutamyl residues in peptides to 5-oxoproline and 5-oxoproline residues. Not involved in the major pathway for 5-oxoproline production. The chain is Glutaminyl-peptide cyclotransferase (QCT) from Arabidopsis thaliana (Mouse-ear cress).